The primary structure comprises 402 residues: Palmitoyltransferase PFA4 (402 aa).

At 1-8 (MAVQLKWP) the chain is on the cytoplasmic side. A helical transmembrane segment spans residues 9-29 (IIGVVIPCVLIAMVAYGSHYF). Topologically, residues 30-39 (VFRTNLSRTE) are lumenal. Residues 40-60 (QILYEVYVCIVWLSYYLAIVV) form a helical membrane-spanning segment. At 61–125 (DPGSPPKNFT…GHNNLPHFLR (65 aa)) the chain is on the cytoplasmic side. The 51-residue stretch at 78-128 (RWCKKCQNYKPERSHHCKTCNKCVLKMDHHCPWTYNCVGHNNLPHFLRFVF) folds into the DHHC domain. Residue Cys108 is the S-palmitoyl cysteine intermediate of the active site. A helical transmembrane segment spans residues 126–146 (FVFFLIVGMTYVLFQLGKQVL). At 147 to 165 (HYYDSSKLPSYLIDKKEMC) the chain is on the lumenal side. A helical transmembrane segment spans residues 166-186 (AVIFLLPVTFFVFVSIIILFV). Residues 187 to 402 (RCMINLLFRG…LVSKDEISNN (216 aa)) are Cytoplasmic-facing.

It belongs to the DHHC palmitoyltransferase family. PFA4 subfamily.

The protein localises to the endoplasmic reticulum membrane. The enzyme catalyses L-cysteinyl-[protein] + hexadecanoyl-CoA = S-hexadecanoyl-L-cysteinyl-[protein] + CoA. Functionally, mediates the reversible addition of palmitate to target proteins, thereby regulating their membrane association and biological function. This Debaryomyces hansenii (strain ATCC 36239 / CBS 767 / BCRC 21394 / JCM 1990 / NBRC 0083 / IGC 2968) (Yeast) protein is Palmitoyltransferase PFA4.